A 296-amino-acid polypeptide reads, in one-letter code: 4-hydroxy-tetrahydrodipicolinate synthase (296 aa).

Thr49 is a pyruvate binding site. The active-site Proton donor/acceptor is the Tyr137. Catalysis depends on Lys166, which acts as the Schiff-base intermediate with substrate. Ile208 contacts pyruvate.

It belongs to the DapA family. As to quaternary structure, homotetramer; dimer of dimers.

It is found in the cytoplasm. The enzyme catalyses L-aspartate 4-semialdehyde + pyruvate = (2S,4S)-4-hydroxy-2,3,4,5-tetrahydrodipicolinate + H2O + H(+). Its pathway is amino-acid biosynthesis; L-lysine biosynthesis via DAP pathway; (S)-tetrahydrodipicolinate from L-aspartate: step 3/4. In terms of biological role, catalyzes the condensation of (S)-aspartate-beta-semialdehyde [(S)-ASA] and pyruvate to 4-hydroxy-tetrahydrodipicolinate (HTPA). This chain is 4-hydroxy-tetrahydrodipicolinate synthase, found in Pelodictyon phaeoclathratiforme (strain DSM 5477 / BU-1).